We begin with the raw amino-acid sequence, 103 residues long: Large ribosomal subunit protein bL21 (103 aa).

Belongs to the bacterial ribosomal protein bL21 family. As to quaternary structure, part of the 50S ribosomal subunit. Contacts protein L20.

Its function is as follows. This protein binds to 23S rRNA in the presence of protein L20. This chain is Large ribosomal subunit protein bL21, found in Vibrio parahaemolyticus serotype O3:K6 (strain RIMD 2210633).